The primary structure comprises 258 residues: MIPPADSLLKYDTPVLVSRNTEKRSPKARLLKVSPQQPGPSGSAPQLPKTKLPSAPCVPDPTKQAEEILNAILPPREWVEDTQLWIQQVSSTPSTRMDVVHLQEQLDLKLQQRQARETGICPVRRELYSQCFDELIREVTINCAERGLLLLRVRDEIRMTIAAYQTLYESSVAFGMRKALQAEQGKSDMERKIAELETEKRDLERQVNEQKAKCEATEKRESERRQVEEKKHNEEIQFLKRTNQQLKAQLEGIIAPKK.

Disordered stretches follow at residues 19 to 60 (RNTE…CVPD) and 207 to 231 (VNEQ…EEKK). The span at 34-48 (SPQQPGPSGSAPQLP) shows a compositional bias: low complexity. Positions 176–255 (MRKALQAEQG…LKAQLEGIIA (80 aa)) form a coiled coil.

Belongs to the inner dynein arm light chain family. Interacts with CFAP45. Interacts with DYNC1H1.

It localises to the cell projection. It is found in the cilium. Its subcellular location is the flagellum. The protein resides in the dynein axonemal particle. The protein localises to the cytoplasm. In terms of biological role, involved in sperm flagellum assembly. The polypeptide is Axonemal dynein light intermediate polypeptide 1 (DNALI1) (Macaca fascicularis (Crab-eating macaque)).